A 292-amino-acid polypeptide reads, in one-letter code: RNA-binding P34 protein (292 aa).

The helical transmembrane segment at 29–46 (CAIYTVACRILFLSVGFM) threads the bilayer. The tract at residues 219-292 (EGFKSPQVEY…NFKAKNKNNE (74 aa)) is RNA-binding.

The protein localises to the host endoplasmic reticulum membrane. In terms of biological role, acts as a ssRNA-binding protein that may be involved in targeting RNA2 to replication sites or facilitating RNA2 replication. This is RNA-binding P34 protein from Lettuce infectious yellows virus (isolate United States/92) (LIYV).